Reading from the N-terminus, the 301-residue chain is Tyrosine recombinase XerD (301 aa).

In terms of domain architecture, Core-binding (CB) spans 6-89 (PLHQQLIEQF…ALKVFFHFLK (84 aa)). In terms of domain architecture, Tyr recombinase spans 108–293 (RLPSILSTEE…ASESIIEKFH (186 aa)). Catalysis depends on residues R152, K174, H245, R248, and H271. Catalysis depends on Y280, which acts as the O-(3'-phospho-DNA)-tyrosine intermediate.

This sequence belongs to the 'phage' integrase family. XerD subfamily. Forms a cyclic heterotetrameric complex composed of two molecules of XerC and two molecules of XerD.

The protein localises to the cytoplasm. Site-specific tyrosine recombinase, which acts by catalyzing the cutting and rejoining of the recombining DNA molecules. The XerC-XerD complex is essential to convert dimers of the bacterial chromosome into monomers to permit their segregation at cell division. It also contributes to the segregational stability of plasmids. This is Tyrosine recombinase XerD from Chlamydia muridarum (strain MoPn / Nigg).